The following is a 2121-amino-acid chain: PAM2 domain-containing protein UPA2 (2121 aa).

The PAM2 1 motif lies at 1–17 (MEGSSLNVAAPVFKPSG). Disordered regions lie at residues 14-46 (KPSG…AVHA), 262-302 (QPED…SALT), 375-397 (AATT…PPST), 475-507 (ARRR…SSGG), 522-543 (ANSD…QKPL), and 586-819 (DLGR…QFSR). An effector domain region spans residues 339-599 (PWPYSLGLPD…GFGYEPQSPN (261 aa)). Over residues 596-607 (QSPNAAPNGTTS) the composition is skewed to polar residues. Composition is skewed to acidic residues over residues 626 to 637 (EENDELGFDGEE) and 646 to 658 (EDAD…EEPN). Positions 679–689 (DGHDRYADDNQ) are enriched in basic and acidic residues. Polar residues predominate over residues 690–712 (SHASNDDSLQDSLTPSDEQFSNP). Basic and acidic residues predominate over residues 719–735 (REERILRRQHRAAERAA). A compositionally biased stretch (basic residues) spans 736-745 (RRERKQRQRG). Composition is skewed to polar residues over residues 749 to 758 (SDNTLPSSSI) and 777 to 788 (NPRNGNTISNPS). 2 short sequence motifs (PAM2) span residues 858-874 (SGIS…KFGG) and 920-937 (TNAA…PGLF). Positions 950-960 (NSLSASPSIAV) are enriched in polar residues. The disordered stretch occupies residues 950-1012 (NSLSASPSIA…PSPPRPKASA (63 aa)). Basic and acidic residues predominate over residues 966-981 (GADHRETENRDMQGRE). A PAM2 4 motif is present at residues 1046–1063 (SHESRLTADAPSFVPTWA). Disordered regions lie at residues 1076–1096 (KRPS…KDLP), 1119–1261 (SKDD…EEES), and 1337–1369 (SHAR…NSSL). The segment covering 1198–1207 (HSPSISQTSD) has biased composition (polar residues). The segment covering 1248 to 1261 (GGNDEDDYEDEEES) has biased composition (acidic residues). Residues 1345-1369 (ETQSTIRPLRQRNSSSDVKTANSSL) are compositionally biased toward polar residues. The stretch at 1783-2054 (LEKQAQANAD…EAKLQTLTAS (272 aa)) forms a coiled coil. A disordered region spans residues 2099 to 2121 (SFASTAGSQGKKEVEVDEGGWWS). A GWW motif is present at residues 2118-2120 (GWW).

The protein belongs to the UPA1 PAM2 domain-binding protein family. As to quaternary structure, might form homodimers via its C-terminal coiled-coil domain. Part of large ribonucleoprotein complexes (mRNPs) containing RNA-binding proteins RRM4 and PAB1, endosome-binding protein UPA1, core scaffold protein UPA2 and associated factor GRP1. Interacts (via PAM2 motifs) with PAB1.

It is found in the cytoplasm. It localises to the cytoskeleton. The protein localises to the endosome. In terms of biological role, core component of endosomal mRNA transport and appears to carry out crucial scaffolding functions. The endosomal mRNA transport regulates polarity of the infectious hyphae by transporting a broad spectrum of cargo mRNAs from the nucleus to cell poles. The polypeptide is PAM2 domain-containing protein UPA2 (Mycosarcoma maydis (Corn smut fungus)).